Consider the following 139-residue polypeptide: Small ribosomal subunit protein uS19 (139 aa).

It belongs to the universal ribosomal protein uS19 family.

In terms of biological role, protein S19 forms a complex with S13 that binds strongly to the 16S ribosomal RNA. In Methanoregula boonei (strain DSM 21154 / JCM 14090 / 6A8), this protein is Small ribosomal subunit protein uS19.